Consider the following 333-residue polypeptide: Glycerol-3-phosphate dehydrogenase [NAD(P)+] (333 aa).

NADPH-binding residues include Ser-10, Trp-11, His-31, Arg-32, and Lys-105. Positions 105, 136, and 138 each coordinate sn-glycerol 3-phosphate. Ala-140 is an NADPH binding site. Sn-glycerol 3-phosphate contacts are provided by Lys-191, Asp-244, Ser-254, Arg-255, and Asn-256. The Proton acceptor role is filled by Lys-191. Position 255 (Arg-255) interacts with NADPH. Positions 279 and 281 each coordinate NADPH.

It belongs to the NAD-dependent glycerol-3-phosphate dehydrogenase family.

It localises to the cytoplasm. The enzyme catalyses sn-glycerol 3-phosphate + NAD(+) = dihydroxyacetone phosphate + NADH + H(+). It carries out the reaction sn-glycerol 3-phosphate + NADP(+) = dihydroxyacetone phosphate + NADPH + H(+). It functions in the pathway membrane lipid metabolism; glycerophospholipid metabolism. Catalyzes the reduction of the glycolytic intermediate dihydroxyacetone phosphate (DHAP) to sn-glycerol 3-phosphate (G3P), the key precursor for phospholipid synthesis. The protein is Glycerol-3-phosphate dehydrogenase [NAD(P)+] of Chlorobium phaeobacteroides (strain DSM 266 / SMG 266 / 2430).